The primary structure comprises 459 residues: Putrescine aminotransferase (459 aa).

Pyridoxal 5'-phosphate-binding positions include 150–151 (GT) and Gln274. Lys300 carries the N6-(pyridoxal phosphate)lysine modification. Thr332 lines the pyridoxal 5'-phosphate pocket.

The protein belongs to the class-III pyridoxal-phosphate-dependent aminotransferase family. Putrescine aminotransferase subfamily. The cofactor is pyridoxal 5'-phosphate.

It catalyses the reaction an alkane-alpha,omega-diamine + 2-oxoglutarate = an omega-aminoaldehyde + L-glutamate. It carries out the reaction putrescine + 2-oxoglutarate = 1-pyrroline + L-glutamate + H2O. The enzyme catalyses cadaverine + 2-oxoglutarate = 5-aminopentanal + L-glutamate. It participates in amine and polyamine degradation; putrescine degradation; 4-aminobutanal from putrescine (transaminase route): step 1/1. In terms of biological role, catalyzes the aminotransferase reaction from putrescine to 2-oxoglutarate, leading to glutamate and 4-aminobutanal, which spontaneously cyclizes to form 1-pyrroline. This is the first step in one of two pathways for putrescine degradation, where putrescine is converted into 4-aminobutanoate (gamma-aminobutyrate or GABA) via 4-aminobutanal. Also functions as a cadaverine transaminase in a a L-lysine degradation pathway to succinate that proceeds via cadaverine, glutarate and L-2-hydroxyglutarate. The polypeptide is Putrescine aminotransferase (Klebsiella pneumoniae (strain 342)).